Here is a 271-residue protein sequence, read N- to C-terminus: Putative two-component membrane permease complex subunit SMU_746c (271 aa).

2 helical membrane passes run 34-54 and 70-90; these read LAYISMALSFILALVQLTIWM and FFSPIILAIPVFIGLLVPTVP.

It belongs to the UPF0703 family. In terms of assembly, interacts with SMU_747c.

It localises to the cell membrane. Could be part of a two-component membrane permease system responsible for amino acid transport under low pH. Involved in acidogenesis, biofilm formation and low-pH survival. In Streptococcus mutans serotype c (strain ATCC 700610 / UA159), this protein is Putative two-component membrane permease complex subunit SMU_746c.